A 381-amino-acid polypeptide reads, in one-letter code: uncharacterized protein (381 aa).

The next 11 helical transmembrane spans lie at 10 to 29 (IFFS…INFY), 75 to 93 (IILI…LIIL), 98 to 117 (LIKI…FTSR), 130 to 147 (YLFL…NLMV), 157 to 179 (TNNT…FLHY), 199 to 221 (IELQ…WYYE), 236 to 255 (LILK…ICYI), 262 to 284 (YFAN…IHGT), 289 to 311 (NILY…ILIL), 323 to 340 (ALLS…AGAL), and 355 to 374 (LFSV…WYFI).

The protein resides in the cell membrane. This is an uncharacterized protein from Rickettsia prowazekii (strain Madrid E).